We begin with the raw amino-acid sequence, 616 residues long: Chaperone protein HscA (616 aa).

It belongs to the heat shock protein 70 family.

Functionally, chaperone involved in the maturation of iron-sulfur cluster-containing proteins. Has a low intrinsic ATPase activity which is markedly stimulated by HscB. Involved in the maturation of IscU. The protein is Chaperone protein HscA of Yersinia enterocolitica serotype O:8 / biotype 1B (strain NCTC 13174 / 8081).